We begin with the raw amino-acid sequence, 307 residues long: MTTDRTPQTPTDIYERVTSQIIAAIEAGASDYRMPWHHDGSAITTPVNVASSKAYRGVNILSLWAAAHAEGYAAGIWGTYRQWQALDAQVRKGERGHLVVFWKTTDRDAADAQHGDEDRHEPARRLFARGYTVFNCAQVDGYTPPEMPVLPEAERIERAERFCASLGIDIRHGGSQAYYRPSTDHVQMPEFACFRDAVAYYAVLLHECGHASGAKHRLDRDLSGRFGSAAYAMEECTVELLSAMICADLNLSVEARPDHARYIASWLEALRSDQRAIFTAASKAQQIADWMHAQQSDAQRNEVRGAA.

This is an uncharacterized protein from Sinorhizobium fredii (strain NBRC 101917 / NGR234).